Reading from the N-terminus, the 60-residue chain is Cytotoxin SP15d (60 aa).

Disulfide bonds link C3-C21, C14-C38, C42-C53, and C54-C59.

This sequence belongs to the three-finger toxin family. Short-chain subfamily. Type IA cytotoxin sub-subfamily. Monomer in solution; Homodimer and oligomer in the presence of negatively charged lipids forming a pore with a size ranging between 20 and 30 Angstroms. In terms of tissue distribution, expressed by the venom gland.

Its subcellular location is the secreted. It localises to the target cell membrane. Shows cytolytic activity on many different cells by forming pore in lipid membranes. In vivo, increases heart rate or kills the animal by cardiac arrest. In addition, it binds to heparin with high affinity, interacts with Kv channel-interacting protein 1 (KCNIP1) in a calcium-independent manner, and binds to integrin alpha-V/beta-3 (ITGAV/ITGB3) with moderate affinity. In Naja atra (Chinese cobra), this protein is Cytotoxin SP15d.